The primary structure comprises 127 residues: uncharacterized protein (127 aa).

Positions 69–94 (GDGGSVPEKGKHGILGAQGQEHPGLN) are disordered.

This is an uncharacterized protein from Homo sapiens (Human).